Here is a 314-residue protein sequence, read N- to C-terminus: Ribosomal RNA small subunit methyltransferase H (314 aa).

S-adenosyl-L-methionine is bound by residues 34 to 36 (GGH), D54, F83, D104, and Q111.

This sequence belongs to the methyltransferase superfamily. RsmH family.

The protein resides in the cytoplasm. The catalysed reaction is cytidine(1402) in 16S rRNA + S-adenosyl-L-methionine = N(4)-methylcytidine(1402) in 16S rRNA + S-adenosyl-L-homocysteine + H(+). In terms of biological role, specifically methylates the N4 position of cytidine in position 1402 (C1402) of 16S rRNA. The chain is Ribosomal RNA small subunit methyltransferase H from Ligilactobacillus salivarius (strain UCC118) (Lactobacillus salivarius).